A 502-amino-acid chain; its full sequence is ATP synthase subunit alpha (502 aa).

An ATP-binding site is contributed by 169-176; that stretch reads GDRQTGKT.

Belongs to the ATPase alpha/beta chains family. As to quaternary structure, F-type ATPases have 2 components, CF(1) - the catalytic core - and CF(0) - the membrane proton channel. CF(1) has five subunits: alpha(3), beta(3), gamma(1), delta(1), epsilon(1). CF(0) has three main subunits: a(1), b(2) and c(9-12). The alpha and beta chains form an alternating ring which encloses part of the gamma chain. CF(1) is attached to CF(0) by a central stalk formed by the gamma and epsilon chains, while a peripheral stalk is formed by the delta and b chains.

The protein localises to the cell membrane. The enzyme catalyses ATP + H2O + 4 H(+)(in) = ADP + phosphate + 5 H(+)(out). Produces ATP from ADP in the presence of a proton gradient across the membrane. The alpha chain is a regulatory subunit. The protein is ATP synthase subunit alpha of Desulfitobacterium hafniense (strain DSM 10664 / DCB-2).